The sequence spans 324 residues: Phospho-N-acetylmuramoyl-pentapeptide-transferase (324 aa).

The next 10 membrane-spanning stretches (helical) occupy residues Gly-5–Ile-25, Pro-52–Ile-72, Leu-77–Leu-97, Val-122–Ile-142, Phe-149–Ala-169, Leu-176–Val-196, Phe-201–Asn-221, Val-227–Leu-247, Leu-253–Ile-273, and Val-302–Val-322.

It belongs to the glycosyltransferase 4 family. MraY subfamily. Mg(2+) serves as cofactor.

It localises to the cell membrane. The catalysed reaction is UDP-N-acetyl-alpha-D-muramoyl-L-alanyl-gamma-D-glutamyl-meso-2,6-diaminopimeloyl-D-alanyl-D-alanine + di-trans,octa-cis-undecaprenyl phosphate = di-trans,octa-cis-undecaprenyl diphospho-N-acetyl-alpha-D-muramoyl-L-alanyl-D-glutamyl-meso-2,6-diaminopimeloyl-D-alanyl-D-alanine + UMP. It functions in the pathway cell wall biogenesis; peptidoglycan biosynthesis. Catalyzes the initial step of the lipid cycle reactions in the biosynthesis of the cell wall peptidoglycan: transfers peptidoglycan precursor phospho-MurNAc-pentapeptide from UDP-MurNAc-pentapeptide onto the lipid carrier undecaprenyl phosphate, yielding undecaprenyl-pyrophosphoryl-MurNAc-pentapeptide, known as lipid I. The sequence is that of Phospho-N-acetylmuramoyl-pentapeptide-transferase from Bacillus cereus (strain AH820).